The following is a 178-amino-acid chain: TM2 domain-containing protein biscotti (178 aa).

Residues 1 to 18 form the signal peptide; sequence MFPVLLLLLFFFAKETHQ. Residues 19-99 are Extracellular-facing; it reads INVDCNELQM…YHLDTTLLLS (81 aa). N69 and N75 each carry an N-linked (GlcNAc...) asparagine glycan. A TM2 domain is found at 94 to 137; that stretch reads TTLLLSVFLGMFGVDRFYLGYPGIGLLKFCTLGGMFLGQLIDIV. A helical transmembrane segment spans residues 100 to 120; sequence VFLGMFGVDRFYLGYPGIGLL. The Cytoplasmic segment spans residues 121–124; it reads KFCT. Residues 125–145 traverse the membrane as a helical segment; the sequence is LGGMFLGQLIDIVLIALQVVG. The Extracellular segment spans residues 146-178; the sequence is PADGSAYVIPYYGAGIHIVRSDNTTYRLPRDDW. N168 carries an N-linked (GlcNAc...) asparagine glycan.

The protein belongs to the TM2 family.

The protein resides in the membrane. Positive regulator of Notch signaling. Maternal neurogenic factor involved in Notch signaling-dependent neuroectodermal specification during early embryogenesis. Functions cooperatively with amx/TM2D3 and amrt/TM2D2. This is TM2 domain-containing protein biscotti from Drosophila melanogaster (Fruit fly).